A 360-amino-acid polypeptide reads, in one-letter code: S-adenosylmethionine:tRNA ribosyltransferase-isomerase (360 aa).

This sequence belongs to the QueA family. In terms of assembly, monomer.

It localises to the cytoplasm. It catalyses the reaction 7-aminomethyl-7-carbaguanosine(34) in tRNA + S-adenosyl-L-methionine = epoxyqueuosine(34) in tRNA + adenine + L-methionine + 2 H(+). It functions in the pathway tRNA modification; tRNA-queuosine biosynthesis. Transfers and isomerizes the ribose moiety from AdoMet to the 7-aminomethyl group of 7-deazaguanine (preQ1-tRNA) to give epoxyqueuosine (oQ-tRNA). The chain is S-adenosylmethionine:tRNA ribosyltransferase-isomerase from Rhodopseudomonas palustris (strain TIE-1).